We begin with the raw amino-acid sequence, 394 residues long: ATP phosphoribosyltransferase regulatory subunit (394 aa).

This sequence belongs to the class-II aminoacyl-tRNA synthetase family. HisZ subfamily. Heteromultimer composed of HisG and HisZ subunits.

It is found in the cytoplasm. It functions in the pathway amino-acid biosynthesis; L-histidine biosynthesis; L-histidine from 5-phospho-alpha-D-ribose 1-diphosphate: step 1/9. Functionally, required for the first step of histidine biosynthesis. May allow the feedback regulation of ATP phosphoribosyltransferase activity by histidine. This Saccharophagus degradans (strain 2-40 / ATCC 43961 / DSM 17024) protein is ATP phosphoribosyltransferase regulatory subunit.